The chain runs to 1407 residues: MKDLLKFLKAQTKTEEFDAIKIALASPDMIRSWSFGEVKKPETINYRTFKPERDGLFCARIFGPVKDYECLCGKYKRLKHRGVICEKCGVEVTQTKVRRERMGHIELASPTAHIWFLKSLPSRIGLLLDMPLRDIERVLYFESYVVIEGGMTNLEKRQILTEEQYLDALEEFGDEFDAKMGAEAIQALLKNMDLEQECETLREELNETNSETKRKKLTKRIKLLEAFVQSGNKPEWMILTVLPVLPPDLRPLVPLDGGRFATSDLNDLYRRVINRNNRLKRLLDLAAPDIIVRNEKRMLQEAVDALLDNGRRGRAITGSNKRPLKSLADMIKGKQGRFRQNLLGKRVDYSGRSVITVGPYLRLHQCGLPKKMALELFKPFIYGKLELRGLATTIKAAKKMVEREESVVWDILDEVIREHPVLLNRAPTLHRLGIQAFEPVLIEGKAIQLHPLVCAAYNADFDGDQMAVHVPLTLEAQLEARALMMSTNNILSPANGEPIIVPSQDVVLGLYYMTRDCVNAKGEGMVLTGPKEAERVYRAGLASLHARVKVRITEHEKNEQDEWVAKTSIIDTTIGRAILWMIVPKGLPYSIVNQALGKKAISKMLNTCYRILGLKPTVIFADQTMYTGFAYAARSGASVGIDDMVIPEKKVEIITEAEAEVAEIQQQFQSGLVTAGERYNKVIDIWAAANERVAKAMMENLSTEVVINRDGVEERQVSFNSIFMMADSGARGSAAQIRQLAGMRGLMAKPDGSIIETPITANFREGLNVLQYFISTHGARKGLADTALKTANSGYLTRRLVDVAQDLVVTEDDCGTHEGIMMTPVIEGGDVKEPLRERVLGRVTAEDVLKPGTADILLPRNTLLHEQQCDLLEEHSVDSLKVRSVVSCETDFGVCAHCYGRDLARGHIINKGEAIGVIAAQSIGEPGTQLTMRTFHIGGAASRAAAESSIQVKNKGTLKLINAKSVTNSAGKLVITSRNVELKMIDEFGRTKESYKVPYGSTMAKGDGEQVAAGETVANWDPHTMPVITEVSGFIRFTDMIDGQTITRQTDDLTGLSSLVILDSAERTAGGKDLRPALKIVDANGNDVMIPGSDMPAQYFLPGKAIVQLEDGIKISSGDTLARVPQESGGTKDITGGLPRVADLFEARRPKEPAILAEISGIISFGKETKGKRRLVITPIDGSDHYEEMIPKWRQLNVFEGERVERGDVVSDGPESPHDILRLRGVHAVTRYITNEVQEVYRLQGVKINDKHIEVIVRQMLRKATIASAGSTDFLDGEQVEFSRVKIANRELEANGKISATFARDLLGITKASLATESFISAASFQETTRVLTEAAVAGKRDELRGLKENVIVGRLIPAGTGYAYHQDRMRRKAAGEAPVVPQVTADEASASLAELLNAGLGGRDDE.

The Zn(2+) site is built by Cys70, Cys72, Cys85, and Cys88. Mg(2+) contacts are provided by Asp460, Asp462, and Asp464. 4 residues coordinate Zn(2+): Cys814, Cys888, Cys895, and Cys898.

It belongs to the RNA polymerase beta' chain family. As to quaternary structure, the RNAP catalytic core consists of 2 alpha, 1 beta, 1 beta' and 1 omega subunit. When a sigma factor is associated with the core the holoenzyme is formed, which can initiate transcription. The cofactor is Mg(2+). Zn(2+) is required as a cofactor.

It catalyses the reaction RNA(n) + a ribonucleoside 5'-triphosphate = RNA(n+1) + diphosphate. In terms of biological role, DNA-dependent RNA polymerase catalyzes the transcription of DNA into RNA using the four ribonucleoside triphosphates as substrates. The protein is DNA-directed RNA polymerase subunit beta' of Erwinia tasmaniensis (strain DSM 17950 / CFBP 7177 / CIP 109463 / NCPPB 4357 / Et1/99).